The chain runs to 610 residues: Granule-bound starch synthase 1, chloroplastic/amyloplastic (610 aa).

The N-terminal 79 residues, 1–79, are a transit peptide targeting the chloroplast; that stretch reads MATVTASSNF…SKVKTAGKIV (79 aa). Lys98 is an ADP-alpha-D-glucose binding site. The stretch at 438–454 forms a coiled coil; that stretch reads TGKKKMEAQILELEEKF.

The protein belongs to the glycosyltransferase 1 family. Bacterial/plant glycogen synthase subfamily. As to quaternary structure, interacts with PTST. This interaction is critical for the localization to starch granules. In terms of tissue distribution, expressed in roots, inflorescences, flowers, fruits and at much higher levels in leaves.

The protein localises to the plastid. Its subcellular location is the chloroplast. The catalysed reaction is an NDP-alpha-D-glucose + [(1-&gt;4)-alpha-D-glucosyl](n) = [(1-&gt;4)-alpha-D-glucosyl](n+1) + a ribonucleoside 5'-diphosphate + H(+). The protein operates within glycan biosynthesis; starch biosynthesis. Functionally, required for the synthesis of amylose. Destroyed as it is released from the starch granules during the night. The circadian expression is controlled by CCA1 and LHY transcription factors. The protein is Granule-bound starch synthase 1, chloroplastic/amyloplastic of Arabidopsis thaliana (Mouse-ear cress).